A 580-amino-acid chain; its full sequence is Putative Xaa-Pro dipeptidyl-peptidase (580 aa).

Residues serine 207, aspartate 319, and histidine 350 each act as charge relay system in the active site.

This sequence belongs to the peptidase S15 family.

The catalysed reaction is Hydrolyzes Xaa-Pro-|- bonds to release unblocked, N-terminal dipeptides from substrates including Ala-Pro-|-p-nitroanilide and (sequentially) Tyr-Pro-|-Phe-Pro-|-Gly-Pro-|-Ile.. The polypeptide is Putative Xaa-Pro dipeptidyl-peptidase (Bacillus cereus (strain ATCC 14579 / DSM 31 / CCUG 7414 / JCM 2152 / NBRC 15305 / NCIMB 9373 / NCTC 2599 / NRRL B-3711)).